We begin with the raw amino-acid sequence, 267 residues long: Large ribosomal subunit protein uL2c (267 aa).

This sequence belongs to the universal ribosomal protein uL2 family. As to quaternary structure, part of the 50S ribosomal subunit.

It localises to the plastid. The protein localises to the apicoplast. The sequence is that of Large ribosomal subunit protein uL2c (rpl2) from Toxoplasma gondii.